Consider the following 929-residue polypeptide: Patatin-like phospholipase domain-containing protein CNE02340 (929 aa).

The interval 37–85 (QPLDGDSSPLSPRSFSLPPESPQLSTASVKAPPPTWKYGPDNGTLRSGR) is disordered. Positions 43–54 (SSPLSPRSFSLP) are enriched in low complexity. Residues 126 to 146 (WPLLFFIFFIIYLEFSAYVIT) traverse the membrane as a helical segment. The PNPLA domain maps to 301–493 (LCLSGGASFG…REDIPLGSLH (193 aa)). The short motif at 332–336 (GTSAG) is the GXSXG element. S334 functions as the Nucleophile in the catalytic mechanism. D480 (proton acceptor) is an active-site residue. Disordered regions lie at residues 644 to 765 (ALSH…NFGD), 778 to 806 (LSSP…QRFR), and 818 to 929 (VSES…QDGA). 2 stretches are compositionally biased toward polar residues: residues 652-664 (NDPA…TNPE) and 745-764 (PTHS…SNFG). The span at 779-806 (SSPFRSIRSNTSSSSNNVQSPSSSQRFR) shows a compositional bias: low complexity. Basic and acidic residues predominate over residues 856–878 (VESHSDRSEDEMLHSGANVKEEY).

It belongs to the PLPL family.

It localises to the membrane. Its function is as follows. Probable lipid hydrolase. In Cryptococcus neoformans var. neoformans serotype D (strain JEC21 / ATCC MYA-565) (Filobasidiella neoformans), this protein is Patatin-like phospholipase domain-containing protein CNE02340.